Consider the following 209-residue polypeptide: MDQQKIPQATAKRLPLYYRFIQNLSLSGKQRVSSAELSEAVKVDSATIRRDFSYFGALGKKGYGYNVNYLLSFFRETLDQDDITRVALIGVGNLGTAFLHYNFTKNNNTKIEMAFDVSEEKVGTEIGGIPVYHLDELEERLSNDIQVAILTVPATVAQAVADRLAETSVHGILNFTPARLNVSENIRIHHIDLAVELQTLVYFLKNYPQ.

Positions 16–55 form a DNA-binding region, H-T-H motif; that stretch reads LYYRFIQNLSLSGKQRVSSAELSEAVKVDSATIRRDFSYF. 90–95 provides a ligand contact to NAD(+); it reads GVGNLG.

This sequence belongs to the transcriptional regulatory Rex family. Homodimer.

Its subcellular location is the cytoplasm. In terms of biological role, modulates transcription in response to changes in cellular NADH/NAD(+) redox state. This Bacillus cereus (strain G9842) protein is Redox-sensing transcriptional repressor Rex.